We begin with the raw amino-acid sequence, 449 residues long: MSVRFSSASRRLGSVRLSSPGAALGAGNTCGVPGIGSGFSCAFGGSSLAGGLGMGGASCGAFTVNEHGLLSGNEKVTMQNLNDRLASYLENVQALEEANADLEQKIKDWYEKFGPGSCRGLDHDYSRYFPIIDDLRTQIISATAQNANIVLQNDNARLTADDFRMKYENELALHQSVDADINGLRRVLDELTLCRTDLEVQLETLSEELAYLKKNHEEEMQALQCAAGGNVNVEMNAAPGVDLTVLLNNMRAEYEALAEQNRRDAEAWFQEKSASLQQQISDDAGATTSARNELTEMKRTLQTLEIELQSLLAMKHSLECSLTETEGNYCTQLAQIQAQISALEEQLHQVRTETEGQKLEYEQLLNVKAHLEKEIETYCLLIGGDEGSCVKSKGQGGPGNQTKDSPKTAIVKTVVEELDPRGKVLSSRVHTLEEKSTKVNNKNEQRIPS.

A head region spans residues 1 to 73 (MSVRFSSASR…VNEHGLLSGN (73 aa)). The coil 1A stretch occupies residues 74 to 109 (EKVTMQNLNDRLASYLENVQALEEANADLEQKIKDW). The 316-residue stretch at 74-389 (EKVTMQNLND…LLIGGDEGSC (316 aa)) folds into the IF rod domain. The interval 110 to 131 (YEKFGPGSCRGLDHDYSRYFPI) is linker 1. The segment at 132 to 223 (IDDLRTQIIS…KNHEEEMQAL (92 aa)) is coil 1B. The linker 12 stretch occupies residues 224 to 246 (QCAAGGNVNVEMNAAPGVDLTVL). Positions 247 to 385 (LNNMRAEYEA…ETYCLLIGGD (139 aa)) are coil 2. The tract at residues 386-449 (EGSCVKSKGQ…NNKNEQRIPS (64 aa)) is tail. Residues 425–449 (LSSRVHTLEEKSTKVNNKNEQRIPS) are disordered. Residues 430 to 449 (HTLEEKSTKVNNKNEQRIPS) are compositionally biased toward basic and acidic residues.

Belongs to the intermediate filament family. In terms of assembly, heterotetramer of two type I and two type II keratins. Interacts with KRT6A to form filaments.

It localises to the cytoplasm. Its function is as follows. Essential for the proper assembly of type I and type II keratin protein complexes and formation of keratin intermediate filaments in the inner root sheath (irs). The chain is Keratin, type I cytoskeletal 27 from Rattus norvegicus (Rat).